A 387-amino-acid chain; its full sequence is Phosphoglycerate kinase (387 aa).

Residues 21-23 (DLN), Arg-36, 59-62 (HLGR), Arg-113, and Arg-146 contribute to the substrate site. Residues Lys-197, Glu-314, and 340 to 343 (GGDT) each bind ATP.

This sequence belongs to the phosphoglycerate kinase family. As to quaternary structure, monomer.

It is found in the cytoplasm. It carries out the reaction (2R)-3-phosphoglycerate + ATP = (2R)-3-phospho-glyceroyl phosphate + ADP. It functions in the pathway carbohydrate degradation; glycolysis; pyruvate from D-glyceraldehyde 3-phosphate: step 2/5. The protein is Phosphoglycerate kinase of Klebsiella pneumoniae (strain 342).